The primary structure comprises 388 residues: MGNSSSSGSHRPPRPASSESALPPAAAAAEELSSYEAACRSDPELRTFDTTLQRRTSRAISTLAVGVEVRSLSLESLREVTGCLLDMNQEVVRVILDCKKDIWKSPELFDLVEDYFESSLHTLDFCTALDKCLKRARDSQLLLHVALQRFDDEEDNDAAAAGQEDAAPSARYARTLHELRQFKAAGDPFTEEFFSAFQAVYRQQLTMLEKLQQRKHRLDKKVRAIKAWRRVSSIIFATTFAAVLICSVVAAAIAAPPVAAALAAAASIPVGSMGKWIDSLLKGYQDALRGQKEVVSAMQVGTFIAIKDLDSIRVLINRVELEISSMIDCVEFAERDEEAVKFGVEEIKKKLEVFMKSVEDLGEQADRCSRDIRRARTVVLQRIIRHPS.

A disordered region spans residues 1-25; it reads MGNSSSSGSHRPPRPASSESALPPA. The stretch at 198–227 forms a coiled coil; sequence QAVYRQQLTMLEKLQQRKHRLDKKVRAIKA. The next 2 membrane-spanning stretches (helical) occupy residues 234–254 and 257–277; these read IIFA…AAIA and PVAA…GKWI. Positions 344 to 376 form a coiled coil; sequence VEEIKKKLEVFMKSVEDLGEQADRCSRDIRRAR.

Belongs to the UPF0496 family.

The protein localises to the membrane. The polypeptide is UPF0496 protein 1 (Oryza sativa subsp. japonica (Rice)).